A 631-amino-acid polypeptide reads, in one-letter code: MSTNQETRGFQSEVKQLLQLMIHSLYSNKEIFLRELISNASDAADKLRFKALSVPELYEGDGDLKVRIRFDEEKGTLTISDNGIGMTRDEVIDHLGTIAKSGTKEFLSALGQDQAKDSQLIGQFGVGFYSAFIVADKVTVKTRAAGVSADKAVLWESAGEGEYSVADIDKKERGTEITLHLREDEKAFLNDWRLREIIGKYSDHIGLPVEILAKEYDDEGKETGIKWEKINKAQALWTRAKNEISEEEYQEFYKHLSHDFTDPLLWAHNKVEGNQEYTSLLYVPAKAPWDLFNREHKHGLKLYVQRVFIMDDAQVFMPNYLRFMRGLLDSNDLPLNVSREILQDNKVTSALRKALTKRALQMLEKLAKDDAEKYQRFWQEFGLVLKEGPAEDFANKETIAKLLRFASTHNDSSQQSVSLEDYVARMKEGQKAIYYITADTYVAAKNSPHLELFNKKGIEVLLLSDRIDEWMLSYLTEFDGKPLQTISKADLDLGDLADKEEDSQKAQDEQYASFVERVKTLLGERVKEVRLTHRLTDTPAVVSTGDDQMTTQMAKLFAAAGQAMPEVKYTFELNPEHGLVQKVAEIADEQQFADWIELLLEQAMLAERGSLENPVAFIKRMNTLLSKLTSH.

The tract at residues 1–339 (MSTNQETRGF…SNDLPLNVSR (339 aa)) is a; substrate-binding. Positions 340–555 (EILQDNKVTS…DDQMTTQMAK (216 aa)) are b. Positions 556-631 (LFAAAGQAMP…NTLLSKLTSH (76 aa)) are c.

Belongs to the heat shock protein 90 family. As to quaternary structure, homodimer.

It localises to the cytoplasm. Molecular chaperone. Has ATPase activity. The sequence is that of Chaperone protein HtpG from Pasteurella multocida (strain Pm70).